The chain runs to 334 residues: Pre-mRNA leakage protein 39 (334 aa).

In terms of assembly, interacts with MLP1 and MLP2.

The protein resides in the nucleus membrane. In terms of biological role, involved in the nuclear retention of improperly spliced pre-mRNAs. This chain is Pre-mRNA leakage protein 39 (PML39), found in Saccharomyces cerevisiae (strain ATCC 204508 / S288c) (Baker's yeast).